Consider the following 303-residue polypeptide: Methionyl-tRNA formyltransferase (303 aa).

110-113 (SLLP) is a binding site for (6S)-5,6,7,8-tetrahydrofolate.

This sequence belongs to the Fmt family.

The catalysed reaction is L-methionyl-tRNA(fMet) + (6R)-10-formyltetrahydrofolate = N-formyl-L-methionyl-tRNA(fMet) + (6S)-5,6,7,8-tetrahydrofolate + H(+). Attaches a formyl group to the free amino group of methionyl-tRNA(fMet). The formyl group appears to play a dual role in the initiator identity of N-formylmethionyl-tRNA by promoting its recognition by IF2 and preventing the misappropriation of this tRNA by the elongation apparatus. This chain is Methionyl-tRNA formyltransferase, found in Campylobacter lari (strain RM2100 / D67 / ATCC BAA-1060).